Here is a 391-residue protein sequence, read N- to C-terminus: Phosphatidate cytidylyltransferase 4, chloroplastic (391 aa).

Residues 1 to 61 (MATFAELVLS…SVSRRFLTAV (61 aa)) constitute a chloroplast transit peptide. Transmembrane regions (helical) follow at residues 102–122 (IFGI…GWVF), 175–195 (FGNI…ALLV), 202–222 (FAQL…PSFW), 254–274 (VGLV…TFAF), 298–318 (IVGL…LSWP), and 321–341 (LFSS…GDLT).

This sequence belongs to the CDS family. Requires Mg(2+) as cofactor.

Its subcellular location is the plastid. The protein resides in the chloroplast membrane. It catalyses the reaction a 1,2-diacyl-sn-glycero-3-phosphate + CTP + H(+) = a CDP-1,2-diacyl-sn-glycerol + diphosphate. The protein operates within phospholipid metabolism; CDP-diacylglycerol biosynthesis; CDP-diacylglycerol from sn-glycerol 3-phosphate: step 3/3. With respect to regulation, highest activities is obtained at about 30 mM CTP and 2 mM phosphatidic acid (PA). Functionally, may be involved in the synthesis of minor phospholipids and in modulation of IP3-mediated signal transduction. Promotes the biosynthesis of plastidial phosphatidylglycerol (PG) which is required for structure and function of thylakoid membranes and, hence, for photoautotrophic growth. The sequence is that of Phosphatidate cytidylyltransferase 4, chloroplastic from Arabidopsis thaliana (Mouse-ear cress).